A 96-amino-acid polypeptide reads, in one-letter code: Transcriptional regulator ATRY (96 aa).

The GATA-type; atypical zinc finger occupies 1–12 (VICTACGQQVNQ). The ADD domain maps to 1-96 (VICTACGQQV…IAVCDSVLEN (96 aa)). The PHD-type; atypical zinc finger occupies 27–82 (LICKRWCAEGGNLICCDSCHNAFCKKCIWRNLGRKEISKIMNEKNEWHCYICCPEP).

Belongs to the SNF2/RAD54 helicase family. As to expression, expressed in developing and adult testis. Also weakly expressed in prostate and epididymis.

The protein resides in the nucleus. It catalyses the reaction ATP + H2O = ADP + phosphate + H(+). Functionally, could be a global transcriptional regulator. Modifies gene expression by affecting chromatin. This is Transcriptional regulator ATRY (ATRY) from Notamacropus eugenii (Tammar wallaby).